Reading from the N-terminus, the 214-residue chain is Small ribosomal subunit protein uS4c (214 aa).

Basic residues-rich tracts occupy residues 1–14 (MSRY…KIKR) and 36–46 (LSRPKPKKKSQ). The segment at 1-46 (MSRYRGPRVKKIKRLGSLPGLTTKKPPIVVRDPRKLSRPKPKKKSQ) is disordered. In terms of domain architecture, S4 RNA-binding spans 92-153 (MRLDNTLFRL…KEKSKALIQN (62 aa)).

Belongs to the universal ribosomal protein uS4 family. In terms of assembly, part of the 30S ribosomal subunit. Contacts protein S5. The interaction surface between S4 and S5 is involved in control of translational fidelity.

The protein resides in the plastid. It is found in the chloroplast. In terms of biological role, one of the primary rRNA binding proteins, it binds directly to 16S rRNA where it nucleates assembly of the body of the 30S subunit. Functionally, with S5 and S12 plays an important role in translational accuracy. The chain is Small ribosomal subunit protein uS4c (rps4) from Pelargonium hortorum (Common geranium).